Here is a 208-residue protein sequence, read N- to C-terminus: Small ribosomal subunit protein uS5 (208 aa).

Positions 28-91 constitute an S5 DRBM domain; that stretch reads LEERLIYANR…EKAKKNVIRV (64 aa).

This sequence belongs to the universal ribosomal protein uS5 family. In terms of assembly, part of the 30S ribosomal subunit. Contacts proteins S4 and S8.

With S4 and S12 plays an important role in translational accuracy. Functionally, located at the back of the 30S subunit body where it stabilizes the conformation of the head with respect to the body. This chain is Small ribosomal subunit protein uS5, found in Aquifex aeolicus (strain VF5).